A 519-amino-acid chain; its full sequence is 2-isopropylmalate synthase (519 aa).

The 263-residue stretch at 5–267 (VIIFDTTLRD…QTRINHKEIY (263 aa)) folds into the Pyruvate carboxyltransferase domain. Mn(2+) is bound by residues aspartate 14, histidine 202, histidine 204, and asparagine 238. Residues 392-519 (VMNYFNTQSG…RKHHTTQEAV (128 aa)) are regulatory domain.

It belongs to the alpha-IPM synthase/homocitrate synthase family. LeuA type 1 subfamily. As to quaternary structure, homodimer. The cofactor is Mn(2+).

The protein localises to the cytoplasm. It carries out the reaction 3-methyl-2-oxobutanoate + acetyl-CoA + H2O = (2S)-2-isopropylmalate + CoA + H(+). The protein operates within amino-acid biosynthesis; L-leucine biosynthesis; L-leucine from 3-methyl-2-oxobutanoate: step 1/4. Catalyzes the condensation of the acetyl group of acetyl-CoA with 3-methyl-2-oxobutanoate (2-ketoisovalerate) to form 3-carboxy-3-hydroxy-4-methylpentanoate (2-isopropylmalate). The polypeptide is 2-isopropylmalate synthase (Proteus mirabilis (strain HI4320)).